A 264-amino-acid chain; its full sequence is Zinc transporter ZupT (264 aa).

A run of 5 helical transmembrane segments spans residues 8-28, 36-56, 75-95, 121-141, and 148-168; these read AFIL…IAFV, FLSV…MIEI, WLTV…DKLI, GLMT…ATFI, and SIAI…GIAV. Residues Asn-132 and Glu-135 each contribute to the Fe(2+) site. Glu-135 and His-160 together coordinate Zn(2+). Residues Asn-161, Glu-164, and Glu-193 each coordinate Fe(2+). Residue Glu-164 participates in Zn(2+) binding. 3 helical membrane passes run 197–217, 219–239, and 244–264; these read AIIG…GAIF, AVAG…AEEY, and LAIY…LLFI.

This sequence belongs to the ZIP transporter (TC 2.A.5) family. ZupT subfamily.

It localises to the cell membrane. It catalyses the reaction Zn(2+)(in) = Zn(2+)(out). In terms of biological role, mediates zinc uptake. May also transport other divalent cations. The protein is Zinc transporter ZupT of Streptococcus mutans serotype c (strain ATCC 700610 / UA159).